Consider the following 95-residue polypeptide: MARSRKKGPYVDPKLLKKIRMLNESGEKKIVKTWSRASTIVPEMVGHTIAVHNGLKHIPVYITENMVGHRLGEFAPTRRFGGHADKKAATKGQVR.

The tract at residues 76 to 95 (PTRRFGGHADKKAATKGQVR) is disordered.

This sequence belongs to the universal ribosomal protein uS19 family.

In terms of biological role, protein S19 forms a complex with S13 that binds strongly to the 16S ribosomal RNA. In Pseudothermotoga lettingae (strain ATCC BAA-301 / DSM 14385 / NBRC 107922 / TMO) (Thermotoga lettingae), this protein is Small ribosomal subunit protein uS19.